The sequence spans 732 residues: Catalase-peroxidase (732 aa).

The first 45 residues, 1–45, serve as a signal peptide directing secretion; sequence MDTKVDNAGKCPVVHTHTAHGGRSNRDWWPNQLNLRILHQNSSLS. A cross-link (tryptophyl-tyrosyl-methioninium (Trp-Tyr) (with M-246)) is located at residues 97–220; that stretch reads WHSAGTYRTG…LSAVQMGLIY (124 aa). The Proton acceptor role is filled by His98. The tryptophyl-tyrosyl-methioninium (Tyr-Met) (with W-97) cross-link spans 220-246; the sequence is YVNPEGPNGNPDPLAAARDIRETFARM. His261 provides a ligand contact to heme b.

The protein belongs to the peroxidase family. Peroxidase/catalase subfamily. As to quaternary structure, homodimer or homotetramer. Heme b is required as a cofactor. In terms of processing, formation of the three residue Trp-Tyr-Met cross-link is important for the catalase, but not the peroxidase activity of the enzyme.

The catalysed reaction is H2O2 + AH2 = A + 2 H2O. The enzyme catalyses 2 H2O2 = O2 + 2 H2O. Bifunctional enzyme with both catalase and broad-spectrum peroxidase activity. The sequence is that of Catalase-peroxidase from Rhizobium rhizogenes (strain K84 / ATCC BAA-868) (Agrobacterium radiobacter).